Reading from the N-terminus, the 812-residue chain is 5-methyltetrahydropteroyltriglutamate--homocysteine methyltransferase 3, chloroplastic (812 aa).

The transit peptide at 1–33 (MGQLALQRLQPLASLPRRPPSLPPPSSATPSLP) directs the protein to the chloroplast. The segment at 13 to 33 (ASLPRRPPSLPPPSSATPSLP) is disordered. Positions 17-27 (RRPPSLPPPSS) are enriched in pro residues. Lys66 and Asn164 together coordinate 5-methyltetrahydropteroyltri-L-glutamate. The segment at 430 to 456 (MRQASRRSSPRVTNAAVQQDVDAVKKS) is disordered. Residues 485–487 (IGS) and Glu538 contribute to the L-homocysteine site. Residues 485-487 (IGS) and Glu538 contribute to the L-methionine site. 5-methyltetrahydropteroyltri-L-glutamate-binding positions include Asp543, Tyr566, 569-570 (RC), and Trp615. Residue Asp653 participates in L-homocysteine binding. Asp653 is an L-methionine binding site. 5 residues coordinate Zn(2+): His695, Cys697, His706, Asp710, and Glu719. Residue His749 is the Proton donor of the active site. Cys781 serves as a coordination point for Zn(2+).

The protein belongs to the vitamin-B12 independent methionine synthase family. Zn(2+) serves as cofactor. As to expression, expressed in seeds.

The protein resides in the plastid. Its subcellular location is the chloroplast. It catalyses the reaction 5-methyltetrahydropteroyltri-L-glutamate + L-homocysteine = tetrahydropteroyltri-L-glutamate + L-methionine. Its pathway is amino-acid biosynthesis; L-methionine biosynthesis via de novo pathway; L-methionine from L-homocysteine (MetE route): step 1/1. Functionally, catalyzes the transfer of a methyl group from 5-methyltetrahydrofolate to homocysteine resulting in methionine formation. The polypeptide is 5-methyltetrahydropteroyltriglutamate--homocysteine methyltransferase 3, chloroplastic (MS3) (Arabidopsis thaliana (Mouse-ear cress)).